We begin with the raw amino-acid sequence, 235 residues long: Nucleoside diphosphate kinase 4, chloroplastic (235 aa).

ATP-binding residues include K93, F141, R169, T175, R186, and N196. The Pros-phosphohistidine intermediate role is filled by H199.

It belongs to the NDK family. Homohexamer. It depends on Mg(2+) as a cofactor.

The protein resides in the plastid. It localises to the chloroplast thylakoid lumen. The enzyme catalyses a 2'-deoxyribonucleoside 5'-diphosphate + ATP = a 2'-deoxyribonucleoside 5'-triphosphate + ADP. It catalyses the reaction a ribonucleoside 5'-diphosphate + ATP = a ribonucleoside 5'-triphosphate + ADP. Functionally, major role in the synthesis of nucleoside triphosphates other than ATP. The ATP gamma phosphate is transferred to the NDP beta phosphate via a ping-pong mechanism, using a phosphorylated active-site intermediate. Shows the highest specificity towards GDP. The chain is Nucleoside diphosphate kinase 4, chloroplastic (NDK4) from Spinacia oleracea (Spinach).